Reading from the N-terminus, the 227-residue chain is PKHD-type hydroxylase GDI1238/Gdia_1949 (227 aa).

In terms of domain architecture, Fe2OG dioxygenase spans 78–178 (RVVPPLFNRY…RLASFFWTQS (101 aa)). Residues His-96, Asp-98, and His-159 each coordinate Fe cation. Residue Arg-169 participates in 2-oxoglutarate binding.

Requires Fe(2+) as cofactor. The cofactor is L-ascorbate.

The protein is PKHD-type hydroxylase GDI1238/Gdia_1949 of Gluconacetobacter diazotrophicus (strain ATCC 49037 / DSM 5601 / CCUG 37298 / CIP 103539 / LMG 7603 / PAl5).